The primary structure comprises 513 residues: Maturase K (513 aa).

Belongs to the intron maturase 2 family. MatK subfamily.

It is found in the plastid. It localises to the chloroplast. Usually encoded in the trnK tRNA gene intron. Probably assists in splicing its own and other chloroplast group II introns. The polypeptide is Maturase K (Astrebla lappacea (Curly Mitchell grass)).